The sequence spans 542 residues: Putative beta-glucosidase 23 (542 aa).

Positions 1 to 29 are cleaved as a signal peptide; the sequence is MAACTSSLVSLLLLLLLLLLLLVAGEATA. Asn-34 is a glycosylation site (N-linked (GlcNAc...) asparagine). Gln-88 is an a beta-D-glucoside binding site. The N-linked (GlcNAc...) asparagine glycan is linked to Asn-135. His-216 is a binding site for a beta-D-glucoside. Catalysis depends on Glu-262, which acts as the Proton donor. Cysteines 281 and 289 form a disulfide. Tyr-405 is an a beta-D-glucoside binding site. Asn-445 is a glycosylation site (N-linked (GlcNAc...) asparagine). Residues Trp-476 and Phe-492 each coordinate a beta-D-glucoside.

The protein belongs to the glycosyl hydrolase 1 family.

The catalysed reaction is Hydrolysis of terminal, non-reducing beta-D-glucosyl residues with release of beta-D-glucose.. The chain is Putative beta-glucosidase 23 (BGLU23) from Oryza sativa subsp. japonica (Rice).